Here is a 455-residue protein sequence, read N- to C-terminus: Elongation factor Tu, mitochondrial (455 aa).

The transit peptide at 1 to 46 (MTTMAAATLLRATPHFSGLAAGRTFLLQGLLRLLKAPALPLLCRGL) directs the protein to the mitochondrion. A tr-type G domain is found at 58-254 (KPHVNVGTIG…AVDTYIPVPA (197 aa)). The G1 stretch occupies residues 67 to 74 (GHVDHGKT). Positions 70, 72, 73, 74, and 75 each coordinate GTP. Position 74 (Thr74) interacts with Mg(2+). Lys82 is modified (N6-acetyllysine). Lys91 carries the post-translational modification N6-acetyllysine; alternate. Lys91 carries the N6-succinyllysine; alternate modification. The G2 stretch occupies residues 108–112 (GITIN). The tract at residues 129 to 132 (DCPG) is G3. 5 residues coordinate GTP: Asn184, Asp187, Ser222, Ala223, and Leu224. The G4 stretch occupies residues 184–187 (NKAD). The tract at residues 222–224 (SAL) is G5. An N6-succinyllysine modification is found at Lys237. Lys259 is modified (N6-acetyllysine). Phosphothreonine is present on Thr281. Lys289 carries the post-translational modification N6-succinyllysine. The residue at position 315 (Ser315) is a Phosphoserine. An N6-acetyllysine mark is found at Lys364 and Lys421.

The protein belongs to the TRAFAC class translation factor GTPase superfamily. Classic translation factor GTPase family. EF-Tu/EF-1A subfamily. As to quaternary structure, interacts with NLRX1. Interacts with ATG16L1. In terms of assembly, (Microbial infection) Interacts with human parainfluenza virus 3 matrix protein; this interaction inhibits RLR-mediated type I interferon production while promoting autophagy. (Microbial infection) Interacts with Hantaan hantavirus glycoprotein N; this interaction contributes to the virus-induced degradation of mitochondria by autophagy, which leads to degradation of MAVS and inhibition of type I interferon (IFN) responses.

Its subcellular location is the mitochondrion. It catalyses the reaction GTP + H2O = GDP + phosphate + H(+). GTP hydrolase that promotes the GTP-dependent binding of aminoacyl-tRNA to the A-site of ribosomes during protein biosynthesis. Also plays a role in the regulation of autophagy and innate immunity. Recruits ATG5-ATG12 and NLRX1 at mitochondria and serves as a checkpoint of the RIGI-MAVS pathway. In turn, inhibits RLR-mediated type I interferon while promoting autophagy. The polypeptide is Elongation factor Tu, mitochondrial (TUFM) (Homo sapiens (Human)).